The following is a 391-amino-acid chain: 8-amino-7-oxononanoate synthase (391 aa).

Residue R20 participates in substrate binding. 106-107 lines the pyridoxal 5'-phosphate pocket; the sequence is GY. Residue H131 participates in substrate binding. Residues S178, H206, and T234 each coordinate pyridoxal 5'-phosphate. An N6-(pyridoxal phosphate)lysine modification is found at K237. Substrate is bound at residue T353.

The protein belongs to the class-II pyridoxal-phosphate-dependent aminotransferase family. BioF subfamily. Homodimer. Pyridoxal 5'-phosphate is required as a cofactor.

It catalyses the reaction 6-carboxyhexanoyl-[ACP] + L-alanine + H(+) = (8S)-8-amino-7-oxononanoate + holo-[ACP] + CO2. It functions in the pathway cofactor biosynthesis; biotin biosynthesis. In terms of biological role, catalyzes the decarboxylative condensation of pimeloyl-[acyl-carrier protein] and L-alanine to produce 8-amino-7-oxononanoate (AON), [acyl-carrier protein], and carbon dioxide. The chain is 8-amino-7-oxononanoate synthase from Trichlorobacter lovleyi (strain ATCC BAA-1151 / DSM 17278 / SZ) (Geobacter lovleyi).